The following is a 332-amino-acid chain: Glycerol-3-phosphate dehydrogenase [NAD(P)+] (332 aa).

NADPH-binding residues include Ser11, Trp12, Lys32, and Lys106. Residues Lys106, Gly137, and Ser139 each contribute to the sn-glycerol 3-phosphate site. Ala141 is an NADPH binding site. Residues Lys192, Asp245, Ser255, Arg256, and Asn257 each coordinate sn-glycerol 3-phosphate. The active-site Proton acceptor is Lys192. Arg256 provides a ligand contact to NADPH. The NADPH site is built by Val280 and Glu282.

This sequence belongs to the NAD-dependent glycerol-3-phosphate dehydrogenase family.

The protein resides in the cytoplasm. The catalysed reaction is sn-glycerol 3-phosphate + NAD(+) = dihydroxyacetone phosphate + NADH + H(+). The enzyme catalyses sn-glycerol 3-phosphate + NADP(+) = dihydroxyacetone phosphate + NADPH + H(+). Its pathway is membrane lipid metabolism; glycerophospholipid metabolism. Catalyzes the reduction of the glycolytic intermediate dihydroxyacetone phosphate (DHAP) to sn-glycerol 3-phosphate (G3P), the key precursor for phospholipid synthesis. This chain is Glycerol-3-phosphate dehydrogenase [NAD(P)+], found in Macrococcus caseolyticus (strain JCSC5402) (Macrococcoides caseolyticum).